Consider the following 680-residue polypeptide: MIDRYKHQQLRIGLVSPQQISAWATKIIPNGEIVGEVTKPYTFHYKTNKPEKDGLFCERIFGPIKSGICACGNYRVIGDEKEDPKFCEQCGVEFVDSRIRRYQMGYIKLTCPVTHVWYLKRLPSYIANLLDKPLKELEGLVYCDFSFARPITKKPTFLRLRGSFEYEIQSWKYSIPLFFTTQGFDIFRNREISTGAGAIREQLADLDLRIIIENSLVEWKQLGEEGPTGNEWEDRKIVRRKDFLVRRMELAKHFIRTNIEPEWMVLCLLPVLPPELRPIIQIEGGKLMSSDINELYRRVIYRNNTLTDLLTTSRSTPGELVMCQEKLVQEAVDTLLDNGIRGQPMRDGHNKVYKSFSDVIEGKEGRFRETLLGKRVDYSGRSVIVVGPSLSLHRCGLPREIAIELFQTFVIRGLIRQHLASNIGVAKSQIREKKPIVWEILQEVMQGHPVLLNRAPTLHRLGIQSFQPILVEGRTICLHPLVCKGFNADFDGDQMAVHVPLSLEAQAEARLLMFSHMNLLSPAIGDPISVPTQDMLIGLYVLTSGTRRGICANRYNPCNRKNYQNERIYETNYKYTKEPFFCNSYDAIGAYRQKKINLDSPLWLRWQLDQRVIASREVPIEVHYESFGNYHEIYAHYLIVRSVKKENFCIYIRTTVGHISFYREIEEAIQGFSQACSYDT.

4 residues coordinate Zn(2+): cysteine 69, cysteine 71, cysteine 87, and cysteine 90. Residues aspartate 489, aspartate 491, and aspartate 493 each coordinate Mg(2+).

It belongs to the RNA polymerase beta' chain family. RpoC1 subfamily. In terms of assembly, in plastids the minimal PEP RNA polymerase catalytic core is composed of four subunits: alpha, beta, beta', and beta''. When a (nuclear-encoded) sigma factor is associated with the core the holoenzyme is formed, which can initiate transcription. It depends on Mg(2+) as a cofactor. The cofactor is Zn(2+).

It is found in the plastid. The protein localises to the chloroplast. The enzyme catalyses RNA(n) + a ribonucleoside 5'-triphosphate = RNA(n+1) + diphosphate. Its function is as follows. DNA-dependent RNA polymerase catalyzes the transcription of DNA into RNA using the four ribonucleoside triphosphates as substrates. This Arabidopsis thaliana (Mouse-ear cress) protein is DNA-directed RNA polymerase subunit beta'.